A 126-amino-acid polypeptide reads, in one-letter code: Small ribosomal subunit protein uS12 (126 aa).

D89 carries the 3-methylthioaspartic acid modification.

Belongs to the universal ribosomal protein uS12 family. Part of the 30S ribosomal subunit. Contacts proteins S8 and S17. May interact with IF1 in the 30S initiation complex.

With S4 and S5 plays an important role in translational accuracy. Functionally, interacts with and stabilizes bases of the 16S rRNA that are involved in tRNA selection in the A site and with the mRNA backbone. Located at the interface of the 30S and 50S subunits, it traverses the body of the 30S subunit contacting proteins on the other side and probably holding the rRNA structure together. The combined cluster of proteins S8, S12 and S17 appears to hold together the shoulder and platform of the 30S subunit. In Sulfurimonas denitrificans (strain ATCC 33889 / DSM 1251) (Thiomicrospira denitrificans (strain ATCC 33889 / DSM 1251)), this protein is Small ribosomal subunit protein uS12.